A 254-amino-acid chain; its full sequence is Coproheme decarboxylase (254 aa).

Residues Arg-136, Tyr-150–Lys-154, His-177, Gln-190, and Ser-228 each bind Fe-coproporphyrin III. Tyr-150 is an active-site residue.

The protein belongs to the ChdC family. Type 1 subfamily. Fe-coproporphyrin III is required as a cofactor.

The enzyme catalyses Fe-coproporphyrin III + 2 H2O2 + 2 H(+) = heme b + 2 CO2 + 4 H2O. It catalyses the reaction Fe-coproporphyrin III + H2O2 + H(+) = harderoheme III + CO2 + 2 H2O. It carries out the reaction harderoheme III + H2O2 + H(+) = heme b + CO2 + 2 H2O. It functions in the pathway porphyrin-containing compound metabolism; protoheme biosynthesis. Involved in coproporphyrin-dependent heme b biosynthesis. Catalyzes the decarboxylation of Fe-coproporphyrin III (coproheme) to heme b (protoheme IX), the last step of the pathway. The reaction occurs in a stepwise manner with a three-propionate harderoheme intermediate. This Bacillus subtilis (strain 168) protein is Coproheme decarboxylase.